We begin with the raw amino-acid sequence, 443 residues long: ATP-dependent protease ATPase subunit HslU (443 aa).

Residues isoleucine 18 and glycine 60 to glutamate 65 each bind ATP. The disordered stretch occupies residues aspartate 141 to glutamate 165. Positions 256, 321, and 393 each coordinate ATP.

This sequence belongs to the ClpX chaperone family. HslU subfamily. A double ring-shaped homohexamer of HslV is capped on each side by a ring-shaped HslU homohexamer. The assembly of the HslU/HslV complex is dependent on binding of ATP.

It is found in the cytoplasm. In terms of biological role, ATPase subunit of a proteasome-like degradation complex; this subunit has chaperone activity. The binding of ATP and its subsequent hydrolysis by HslU are essential for unfolding of protein substrates subsequently hydrolyzed by HslV. HslU recognizes the N-terminal part of its protein substrates and unfolds these before they are guided to HslV for hydrolysis. The sequence is that of ATP-dependent protease ATPase subunit HslU from Photobacterium profundum (strain SS9).